We begin with the raw amino-acid sequence, 517 residues long: Protein ERGIC-53 (517 aa).

Positions 1 to 30 (MAVSRRRGPQAGAQSFFCALLLSFSQFVGS) are cleaved as a signal peptide. At 31–484 (DGMGGDAAAP…DLPAFPSCLS (454 aa)) the chain is on the lumenal side. The region spanning 52-275 (RRFEYKYSFK…DVLSFLTFQL (224 aa)) is the L-type lectin-like domain. A carbohydrate-binding residues include S96 and D129. Positions 160, 162, 163, 164, 165, 169, and 170 each coordinate Ca(2+). An a carbohydrate-binding site is contributed by N164. H186 contributes to the a carbohydrate binding site. D189 provides a ligand contact to Ca(2+). An intrachain disulfide couples C198 to C238. 259 to 261 (GGL) is a binding site for a carbohydrate. Disordered stretches follow at residues 276–297 (TEPG…KEKY) and 377–396 (EISR…SQQE). Residues 278–297 (PGKEPPTPEKDISEKEKEKY) are compositionally biased toward basic and acidic residues. S433 is subject to Phosphoserine. The chain crosses the membrane as a helical span at residues 485-505 (TVHFVIFIVVQTVLFIGYIMY). Residues 506–517 (RTQQEAAAKKFF) are Cytoplasmic-facing. Residues 506–517 (RTQQEAAAKKFF) are mediates interaction with RAB3GAP1, RAB3GAP2 and UBXN6. Positions 516–517 (FF) match the ER export motif motif.

Exists both as a covalent disulfide-linked homohexamer, and a complex of three disulfide-linked dimers non-covalently kept together. Interacts with MCFD2. May interact with TMEM115. Interacts with RAB3GAP1 and RAB3GAP2. Interacts with UBXN6. Interacts with SERPINA1/alpha1-antitrypsin. Interacts with BET1.

Its subcellular location is the endoplasmic reticulum-Golgi intermediate compartment membrane. The protein resides in the golgi apparatus membrane. It localises to the endoplasmic reticulum membrane. Mannose-specific lectin. May recognize sugar residues of glycoproteins, glycolipids, or glycosylphosphatidyl inositol anchors and may be involved in the sorting or recycling of proteins, lipids, or both. The LMAN1-MCFD2 complex forms a specific cargo receptor for the ER-to-Golgi transport of selected proteins. The polypeptide is Protein ERGIC-53 (Lman1) (Rattus norvegicus (Rat)).